The primary structure comprises 496 residues: Glycerol kinase (496 aa).

Threonine 12 is an ADP binding site. Residues threonine 12, threonine 13, and serine 14 each coordinate ATP. Residue threonine 12 participates in sn-glycerol 3-phosphate binding. Arginine 16 provides a ligand contact to ADP. Positions 82, 83, and 134 each coordinate sn-glycerol 3-phosphate. 3 residues coordinate glycerol: arginine 82, glutamate 83, and tyrosine 134. Position 230 is a phosphohistidine; by HPr (histidine 230). Aspartate 244 lines the sn-glycerol 3-phosphate pocket. Glycerol is bound by residues aspartate 244 and glutamine 245. 2 residues coordinate ADP: threonine 266 and glycine 309. Residues threonine 266, glycine 309, glutamine 313, and glycine 410 each contribute to the ATP site. ADP-binding residues include glycine 410 and asparagine 414.

It belongs to the FGGY kinase family. Homotetramer and homodimer (in equilibrium). The phosphoenolpyruvate-dependent sugar phosphotransferase system (PTS), including enzyme I, and histidine-containing protein (HPr) are required for the phosphorylation, which leads to the activation of the enzyme.

The enzyme catalyses glycerol + ATP = sn-glycerol 3-phosphate + ADP + H(+). It participates in polyol metabolism; glycerol degradation via glycerol kinase pathway; sn-glycerol 3-phosphate from glycerol: step 1/1. With respect to regulation, activated by phosphorylation and inhibited by fructose 1,6-bisphosphate (FBP). In terms of biological role, key enzyme in the regulation of glycerol uptake and metabolism. Catalyzes the phosphorylation of glycerol to yield sn-glycerol 3-phosphate. The chain is Glycerol kinase from Geobacillus kaustophilus (strain HTA426).